Consider the following 334-residue polypeptide: Formamidase (334 aa).

Residues 14–260 (FLVAAIQFPV…WEIVTGEIYP (247 aa)) enclose the CN hydrolase domain. Catalysis depends on Glu60, which acts as the Proton acceptor. The Proton donor role is filled by Lys133. Cys166 acts as the Nucleophile in catalysis.

It belongs to the carbon-nitrogen hydrolase superfamily. Aliphatic amidase family.

The catalysed reaction is formamide + H2O = formate + NH4(+). Its function is as follows. Is an aliphatic amidase with a restricted substrate specificity, as it only hydrolyzes formamide. This Helicobacter pylori (strain P12) protein is Formamidase.